A 121-amino-acid polypeptide reads, in one-letter code: Large ribosomal subunit protein bL12 (121 aa).

The protein belongs to the bacterial ribosomal protein bL12 family. Homodimer. Part of the ribosomal stalk of the 50S ribosomal subunit. Forms a multimeric L10(L12)X complex, where L10 forms an elongated spine to which 2 to 4 L12 dimers bind in a sequential fashion. Binds GTP-bound translation factors.

In terms of biological role, forms part of the ribosomal stalk which helps the ribosome interact with GTP-bound translation factors. Is thus essential for accurate translation. The protein is Large ribosomal subunit protein bL12 of Pseudomonas fluorescens (strain ATCC BAA-477 / NRRL B-23932 / Pf-5).